We begin with the raw amino-acid sequence, 162 residues long: Interleukin-15 (162 aa).

The first 29 residues, 1–29 (MRISKPHLRSVSIQCYLCLLLNSHFLTEA), serve as a signal peptide directing secretion. Residues 30-48 (GIHVFILGCFSAGLPKTEA) constitute a propeptide that is removed on maturation. 2 disulfide bridges follow: C83/C133 and C90/C136. Residue N127 is glycosylated (N-linked (GlcNAc...) asparagine).

The protein belongs to the IL-15/IL-21 family.

It is found in the secreted. In terms of biological role, cytokine that plays a major role in the development of inflammatory and protective immune responses to microbial invaders and parasites by modulating immune cells of both the innate and adaptive immune systems. Stimulates the proliferation of natural killer cells, T-cells and B-cells and promotes the secretion of several cytokines. In monocytes, induces the production of IL8 and monocyte chemotactic protein 1/CCL2, two chemokines that attract neutrophils and monocytes respectively to sites of infection. Unlike most cytokines, which are secreted in soluble form, IL15 is expressed in association with its high affinity IL15RA on the surface of IL15-producing cells and delivers signals to target cells that express IL2RB and IL2RG receptor subunits. Binding to its receptor triggers the phosphorylation of JAK1 and JAK3 and the recruitment and subsequent phosphorylation of signal transducer and activator of transcription-3/STAT3 and STAT5. In mast cells, induces the rapid tyrosine phosphorylation of STAT6 and thereby controls mast cell survival and release of cytokines such as IL4. The polypeptide is Interleukin-15 (IL15) (Macaca thibetana (Pere David's macaque)).